A 465-amino-acid polypeptide reads, in one-letter code: Methionine aminopeptidase 2-2 (465 aa).

Residues 1–13 show a composition bias toward basic and acidic residues; sequence MGSKTPNDHRRGP. The interval 1–92 is disordered; that stretch reads MGSKTPNDHR…KKKTLLGGLQ (92 aa). Residues 44-55 show a composition bias toward acidic residues; it reads GETEDGEDEDDD. Residues 71 to 86 are compositionally biased toward basic residues; that stretch reads TKKKNKRKKNKKKKKT. Substrate is bound at residue His217. The a divalent metal cation site is built by Asp238, Asp249, and His318. A substrate-binding site is contributed by His326. Positions 351 and 446 each coordinate a divalent metal cation.

Belongs to the peptidase M24A family. Methionine aminopeptidase eukaryotic type 2 subfamily. It depends on Co(2+) as a cofactor. Zn(2+) serves as cofactor. Requires Mn(2+) as cofactor. The cofactor is Fe(2+).

Its subcellular location is the cytoplasm. It catalyses the reaction Release of N-terminal amino acids, preferentially methionine, from peptides and arylamides.. Functionally, cotranslationally removes the N-terminal methionine from nascent proteins. The N-terminal methionine is often cleaved when the second residue in the primary sequence is small and uncharged (Met-Ala-, Cys, Gly, Pro, Ser, Thr, or Val). This chain is Methionine aminopeptidase 2-2, found in Blastomyces gilchristii (strain SLH14081) (Blastomyces dermatitidis).